The following is a 195-amino-acid chain: MVTGNFNLEKLLKNLKKKTGKKAEILTMNEKVEKEDVVQNEANEQETVTKKNEEGDIVDKKDETPEVEEKIDKPETSTRKLEIHIAFLSEKYEADIGKVISKFEGVKTCKVDVENKKVVITGDFDEEKLWKELEEKMRKRIVKMEKEKKDDEPITKDEENEIDRGVYMNPSSDDEKEMARWMMFSDENPNACSIS.

Disordered regions lie at residues Asp36–Thr76 and Glu145–Ser172. Basic and acidic residues-rich tracts occupy residues Thr47–Thr76 and Glu145–Asp157. In terms of domain architecture, HMA spans Thr78–Lys149. Cys192 carries the post-translational modification Cysteine methyl ester. A lipid anchor (S-farnesyl cysteine) is attached at Cys192. A propeptide spans Ser193–Ser195 (removed in mature form).

It belongs to the HIPP family.

Its function is as follows. Probable heavy-metal-binding protein. Required for female gametophyte development and function. The chain is Heavy metal-associated isoprenylated plant protein 18 from Arabidopsis thaliana (Mouse-ear cress).